Here is a 689-residue protein sequence, read N- to C-terminus: Sp110 nuclear body protein (689 aa).

The HSR domain occupies 1 to 108 (MFTMTRAMEE…IYRSFKRVGA (108 aa)). 2 disordered regions span residues 131–216 (SSLH…MPSL) and 231–385 (QIRD…GHGI). Pro residues predominate over residues 138–148 (ALPPPQPPQPS). Residues 159–168 (PGTSSQQSDE) show a composition bias toward polar residues. Phosphoserine is present on residues Ser175 and Ser177. A compositionally biased stretch (polar residues) spans 190 to 204 (GRSTSVTNDKLTSKM). Phosphoserine occurs at positions 244 and 256. Residues 276 to 296 (KGKKRKRCIWSTPKRRHKKKS) show a composition bias toward basic residues. The short motif at 281 to 294 (KRCIWSTPKRRHKK) is the Nuclear localization signal element. Composition is skewed to basic and acidic residues over residues 314–325 (RVDQVPQKKDDS) and 334–350 (RAQK…RSEE). At Ser380 the chain carries Phosphoserine. A Nuclear localization signal motif is present at residues 428–444 (KKKEKDICSSSKRRFQK). The 82-residue stretch at 454-535 (SDTVDFHCSK…GELLKRKNSD (82 aa)) folds into the SAND domain. The tract at residues 525-529 (LGELL) is nuclear hormone receptor interaction. A PHD-type zinc finger spans residues 534-580 (SDECEVCCQGGQLLCCGTCPRVFHEDCHIPPVEAKRMLWSCTFCRMK). Positions 583–674 (SGSQQCHHVS…AEFEKDLKDV (92 aa)) constitute a Bromo domain.

As to quaternary structure, (Microbial infection) Isoform 3 interacts with HCV core protein. In terms of processing, phosphorylated (isoform 2). Highly expressed in peripheral blood leukocytes and spleen. Detected at intermediate levels in thymus, prostate, testis, ovary, small intestine and colon, and at low levels in heart, brain, placenta, lung, liver, skeletal muscle, kidney and pancreas.

Its subcellular location is the nucleus. Its function is as follows. Transcription factor. May be a nuclear hormone receptor coactivator. Enhances transcription of genes with retinoic acid response elements (RARE). The chain is Sp110 nuclear body protein (SP110) from Homo sapiens (Human).